We begin with the raw amino-acid sequence, 434 residues long: UDP-N-acetylmuramoylalanine--D-glutamate ligase (434 aa).

113–119 (GSNGKST) provides a ligand contact to ATP.

This sequence belongs to the MurCDEF family.

It is found in the cytoplasm. It carries out the reaction UDP-N-acetyl-alpha-D-muramoyl-L-alanine + D-glutamate + ATP = UDP-N-acetyl-alpha-D-muramoyl-L-alanyl-D-glutamate + ADP + phosphate + H(+). It functions in the pathway cell wall biogenesis; peptidoglycan biosynthesis. Cell wall formation. Catalyzes the addition of glutamate to the nucleotide precursor UDP-N-acetylmuramoyl-L-alanine (UMA). This is UDP-N-acetylmuramoylalanine--D-glutamate ligase from Pasteurella multocida (strain Pm70).